Here is a 329-residue protein sequence, read N- to C-terminus: MNKKTIAMLGAGSWGTAVAIHLAKIGHKTLLWSHNPQHVALMAEQHSNPAYLPGIPFPENLIPSDDLIECVQLADYVIIAVPSHAFAEIINKIPKPTQGLAWLTKGVDPASHQLLSQLVASRFGVDFPIAVISGPSFAKEVARFLPTALTLASNNTNYQKKMHQLFHHDNIRVYLSDDLIGVQLCGAVKNILAIACGISDGLGYGANAKAALITRGLAEMTRLGLSMGARQDTFLGLAGVGDLVLTCTDDQSRNRRFGLLLGREVPIPEAEHQIGQVVEGKHNAAQICAIANKNKVEMPICEQINALLHGIVHAQQAVNNLMSRPAKEE.

Residues S13, W14, H34, and K105 each contribute to the NADPH site. K105, G134, and S136 together coordinate sn-glycerol 3-phosphate. Position 138 (A138) interacts with NADPH. Residues K189, D242, S252, R253, and N254 each coordinate sn-glycerol 3-phosphate. The active-site Proton acceptor is the K189. R253 serves as a coordination point for NADPH. Residues V277 and E279 each coordinate NADPH.

The protein belongs to the NAD-dependent glycerol-3-phosphate dehydrogenase family.

The protein resides in the cytoplasm. It catalyses the reaction sn-glycerol 3-phosphate + NAD(+) = dihydroxyacetone phosphate + NADH + H(+). The catalysed reaction is sn-glycerol 3-phosphate + NADP(+) = dihydroxyacetone phosphate + NADPH + H(+). Its pathway is membrane lipid metabolism; glycerophospholipid metabolism. Catalyzes the reduction of the glycolytic intermediate dihydroxyacetone phosphate (DHAP) to sn-glycerol 3-phosphate (G3P), the key precursor for phospholipid synthesis. This is Glycerol-3-phosphate dehydrogenase [NAD(P)+] from Legionella pneumophila (strain Paris).